Consider the following 295-residue polypeptide: Light-independent protochlorophyllide reductase iron-sulfur ATP-binding protein (295 aa).

ATP-binding positions include 39 to 44 and Lys-68; that span reads GIGKST. Residue Ser-43 coordinates Mg(2+). Residues Cys-124 and Cys-158 each coordinate [4Fe-4S] cluster. 209-210 lines the ATP pocket; that stretch reads NR.

The protein belongs to the NifH/BchL/ChlL family. Homodimer. Protochlorophyllide reductase is composed of three subunits; ChlL, ChlN and ChlB. It depends on [4Fe-4S] cluster as a cofactor.

The enzyme catalyses chlorophyllide a + oxidized 2[4Fe-4S]-[ferredoxin] + 2 ADP + 2 phosphate = protochlorophyllide a + reduced 2[4Fe-4S]-[ferredoxin] + 2 ATP + 2 H2O. It participates in porphyrin-containing compound metabolism; chlorophyll biosynthesis (light-independent). In terms of biological role, component of the dark-operative protochlorophyllide reductase (DPOR) that uses Mg-ATP and reduced ferredoxin to reduce ring D of protochlorophyllide (Pchlide) to form chlorophyllide a (Chlide). This reaction is light-independent. The L component serves as a unique electron donor to the NB-component of the complex, and binds Mg-ATP. The chain is Light-independent protochlorophyllide reductase iron-sulfur ATP-binding protein from Prochlorococcus marinus (strain MIT 9312).